Here is a 215-residue protein sequence, read N- to C-terminus: MKLLSVLALLMFIGVVLADNDCYNPKCGRGHFNLKGKKPLCVPPAPILTEKYFTNITNHIAVVVDSTVTKPGQQSQLDVQKEYFNRLTLGPWKAPSVFRNYTAYYCGDAIPFNVNIHLTASRDYDNGTAFHEIFELVDKSSNFFRDWYDEMGPSIVYHGLMLKTDDNGVPVMNACQLRQYMEQQNFQLVFHLPSCPKDAYFFRAGYAHVEVVIPC.

This is an uncharacterized protein from Acanthamoeba polyphaga mimivirus (APMV).